The sequence spans 175 residues: Alpha-crystallin B chain (175 aa).

N-acetylmethionine is present on Met1. Ser19 carries the post-translational modification Phosphoserine. A glycan (O-linked (GlcNAc) serine) is linked at Ser41. Ser45 and Ser59 each carry phosphoserine. Residues 56–164 (RAPSWIDTGL…PERTIPITRE (109 aa)) enclose the sHSP domain. Residue His83 coordinates Zn(2+). Lys92 is subject to N6-acetyllysine. Zn(2+) contacts are provided by His104, Glu106, His111, and His119. The segment at 142–175 (VLTVNGPRKQAPGPERTIPITREEKPAVTAAPKK) is disordered. An N6-acetyllysine modification is found at Lys166. An O-linked (GlcNAc) threonine glycan is attached at Thr170.

Belongs to the small heat shock protein (HSP20) family. Heteromer composed of three CRYAA and one CRYAB subunits. Aggregates with homologous proteins, including the small heat shock protein HSPB1, to form large heteromeric complexes. Inter-subunit bridging via zinc ions enhances stability, which is crucial as there is no protein turn over in the lens. Interacts with HSPBAP1 and TTN/titin. Interacts with TMEM109; in the cellular response to DNA damage. Interacts with DES; binds rapidly during early stages of DES filament assembly and a reduced binding seen in the later stages. Interacts with TMED10; the interaction mediates the translocation from the cytoplasm into the ERGIC (endoplasmic reticulum-Golgi intermediate compartment) and thereby secretion. Interacts with ATP6V1A and with MTOR, forming a ternary complex. As to expression, lens as well as other tissues.

Its subcellular location is the cytoplasm. It localises to the nucleus. The protein localises to the secreted. It is found in the lysosome. Functionally, may contribute to the transparency and refractive index of the lens. Has chaperone-like activity, preventing aggregation of various proteins under a wide range of stress conditions. In lens epithelial cells, stabilizes the ATP6V1A protein, preventing its degradation by the proteasome. The chain is Alpha-crystallin B chain (CRYAB) from Oryctolagus cuniculus (Rabbit).